We begin with the raw amino-acid sequence, 965 residues long: FKBP12-associated protein 1 (965 aa).

The segment at cysteine 68 to tyrosine 118 adopts an RING-type; degenerate zinc-finger fold. 5 consecutive NF-X1-type zinc fingers follow at residues cysteine 159–arginine 177, cysteine 216–glutamate 235, cysteine 362–glutamine 382, cysteine 468–glutamate 487, and cysteine 586–glutamine 606. An R3H domain is found at glutamate 733 to aspartate 796. Threonine 951 is subject to Phosphothreonine. A Phosphoserine modification is found at serine 958.

Belongs to the NFX1 family. Interacts with FPR1.

It is found in the cytoplasm. Its subcellular location is the nucleus. Its function is as follows. May play a role in transcription regulation. The polypeptide is FKBP12-associated protein 1 (FAP1) (Saccharomyces cerevisiae (strain ATCC 204508 / S288c) (Baker's yeast)).